The chain runs to 666 residues: Probable potassium transport system protein Kup (666 aa).

12 helical membrane passes run 16–36 (GFIIALGIVYGDIGTSPLYTM), 58–78 (ISLIIWTLTLITTIKYVLIAL), 100–120 (PWLIIPAMIGGATLLSDGALT), 141–161 (IYQNQTNVIITTLVILIVLFG), 165–185 (FGTGFIGKIFGPVMFIWFSFL), 221–241 (IFILGSIFLATTGAEALYSDL), 253–273 (WPFVKMCIVLSYCGQAAWILA), 292–312 (LTVYVVILATLAAIIASQALI), 343–363 (LYIPVINWILFAVTSCTVLYF), 373–393 (YGLAITITMLMTTILLNYYLI), 399–419 (PFLAHLVMTFFALVEFIFFWA), and 424–444 (FMHGGYVVVILALAIVFVMFI).

This sequence belongs to the HAK/KUP transporter (TC 2.A.72) family.

The protein resides in the cell membrane. The catalysed reaction is K(+)(in) + H(+)(in) = K(+)(out) + H(+)(out). Transport of potassium into the cell. Likely operates as a K(+):H(+) symporter. In Streptococcus pyogenes serotype M18 (strain MGAS8232), this protein is Probable potassium transport system protein Kup.